The sequence spans 159 residues: Small ribosomal subunit protein uS9 (159 aa).

This sequence belongs to the universal ribosomal protein uS9 family.

In Bradyrhizobium diazoefficiens (strain JCM 10833 / BCRC 13528 / IAM 13628 / NBRC 14792 / USDA 110), this protein is Small ribosomal subunit protein uS9.